Reading from the N-terminus, the 338-residue chain is Ribosomal RNA small subunit methyltransferase C (338 aa).

The protein belongs to the methyltransferase superfamily. RsmC family. Monomer.

The protein resides in the cytoplasm. It carries out the reaction guanosine(1207) in 16S rRNA + S-adenosyl-L-methionine = N(2)-methylguanosine(1207) in 16S rRNA + S-adenosyl-L-homocysteine + H(+). Specifically methylates the guanine in position 1207 of 16S rRNA in the 30S particle. In Photorhabdus laumondii subsp. laumondii (strain DSM 15139 / CIP 105565 / TT01) (Photorhabdus luminescens subsp. laumondii), this protein is Ribosomal RNA small subunit methyltransferase C.